A 1135-amino-acid chain; its full sequence is DNA-directed RNA polymerase I subunit RPA2 (1135 aa).

The tract at residues 1-26 (MDVDGRWRNLPSGPSLKHLTDPSYGI) is disordered. Residue R180 participates in RNA binding. Residues 194-208 (VRPKWKSRGLGYTQF) form a loop B region. The interval 236 to 247 (LNFIYRKELFFL) is loop A. D367 contacts RNA. Fork loop regions lie at residues 439–453 (LRSK…DSGL) and 474–489 (RGAA…VRRL). D755 is a binding site for Mg(2+). Residue K890 participates in RNA binding. DNA contacts are provided by K1020 and R1036. Phosphoserine is present on S1051. Zn(2+)-binding residues include C1070, C1073, C1098, and C1101. The C4-type zinc-finger motif lies at 1070 to 1101 (CVECGSLLSPLLEKPPPSWSAMRNRKYNCTVC).

Belongs to the RNA polymerase beta chain family. In terms of assembly, component of the RNA polymerase I (Pol I) complex consisting of 13 subunits: a ten-subunit catalytic core composed of POLR1A/RPA1, POLR1B/RPA2, POLR1C/RPAC1, POLR1D/RPAC2, POLR1H/RPA12, POLR2E/RPABC1, POLR2F/RPABC2, POLR2H/RPABC3, POLR2K/RPABC4 and POLR2L/RPABC5; a mobile stalk subunit POLR1F/RPA43 protruding from the core and additional subunits homologous to general transcription factors POLR1E/RPA49 and POLR1G/RPA34. Part of Pol I pre-initiation complex (PIC), in which Pol I core assembles with RRN3 and promoter-bound UTBF and SL1/TIF-IB complex. Mg(2+) serves as cofactor.

The protein resides in the nucleus. It localises to the nucleolus. The protein localises to the chromosome. The enzyme catalyses RNA(n) + a ribonucleoside 5'-triphosphate = RNA(n+1) + diphosphate. In terms of biological role, catalytic core component of RNA polymerase I (Pol I), a DNA-dependent RNA polymerase which synthesizes ribosomal RNA precursors using the four ribonucleoside triphosphates as substrates. Transcribes 47S pre-rRNAs from multicopy rRNA gene clusters, giving rise to 5.8S, 18S and 28S ribosomal RNAs. Pol I-mediated transcription cycle proceeds through transcription initiation, transcription elongation and transcription termination stages. During transcription initiation, Pol I pre-initiation complex (PIC) is recruited by the selectivity factor 1 (SL1/TIF-IB) complex bound to the core promoter that precedes an rDNA repeat unit. The PIC assembly bends the promoter favoring the formation of the transcription bubble and promoter escape. Once the polymerase has escaped from the promoter it enters the elongation phase during which RNA is actively polymerized, based on complementarity with the template DNA strand. Highly processive, assembles in structures referred to as 'Miller trees' where many elongating Pol I complexes queue and transcribe the same rDNA coding regions. At terminator sequences downstream of the rDNA gene, PTRF interacts with Pol I and halts Pol I transcription leading to the release of the RNA transcript and polymerase from the DNA. Forms Pol I active center together with the largest subunit POLR1A/RPA1. Appends one nucleotide at a time to the 3' end of the nascent RNA, with POLR1A/RPA1 contributing a Mg(2+)-coordinating DxDGD motif, and POLR1B/RPA2 participating in the coordination of a second Mg(2+) ion and providing lysine residues believed to facilitate Watson-Crick base pairing between the incoming nucleotide and the template base. Typically, Mg(2+) ions direct a 5' nucleoside triphosphate to form a phosphodiester bond with the 3' hydroxyl of the preceding nucleotide of the nascent RNA, with the elimination of pyrophosphate. Has proofreading activity: Pauses and backtracks to allow the cleavage of a missincorporated nucleotide via POLR1H/RPA12. High Pol I processivity is associated with decreased transcription fidelity. The protein is DNA-directed RNA polymerase I subunit RPA2 of Mus musculus (Mouse).